The sequence spans 422 residues: Histidine--tRNA ligase (422 aa).

This sequence belongs to the class-II aminoacyl-tRNA synthetase family. Homodimer.

The protein localises to the cytoplasm. The catalysed reaction is tRNA(His) + L-histidine + ATP = L-histidyl-tRNA(His) + AMP + diphosphate + H(+). The chain is Histidine--tRNA ligase from Nocardia farcinica (strain IFM 10152).